The sequence spans 221 residues: Probable GTP-binding protein EngB (221 aa).

Residues 32 to 205 (GIPQIAFAGR…RKIVDSLITT (174 aa)) enclose the EngB-type G domain. GTP contacts are provided by residues 40 to 47 (GRSNAGKS), 67 to 71 (GKTKL), 85 to 88 (DLPG), 152 to 155 (TKID), and 184 to 186 (VSN). Mg(2+)-binding residues include Ser47 and Thr69.

The protein belongs to the TRAFAC class TrmE-Era-EngA-EngB-Septin-like GTPase superfamily. EngB GTPase family. Mg(2+) is required as a cofactor.

Its function is as follows. Necessary for normal cell division and for the maintenance of normal septation. This is Probable GTP-binding protein EngB from Leptospira borgpetersenii serovar Hardjo-bovis (strain JB197).